The primary structure comprises 415 residues: FXa-directed anticoagulant (415 aa).

Residues 1–17 (MYLKIVILVTFPLVCFT) form the signal peptide. N-linked (GlcNAc...) asparagine glycosylation is found at Asn-117, Asn-166, Asn-216, and Asn-320.

The protein belongs to the serpin family. As to quaternary structure, (Microbial infection) Interacts with Zika virus envelope protein E and Zika virus-like particles; the interaction does not affect Zika virus replication in human endothelial cells and keratinocytes. In terms of processing, the N-terminus is blocked. In terms of tissue distribution, female salivary gland (at protein level). Not detected in female carcass without head and salivary glands. Not detected in male tissues.

Its subcellular location is the secreted. In terms of biological role, anticoagulant serpin-type protein inhibiting host coagulation factor Xa (F10). Does not inhibit host thrombin (F2) and trypsin. (Microbial infection) Does not affect Zika virus replication in human endothelial cells and keratinocytes. This chain is FXa-directed anticoagulant, found in Aedes aegypti (Yellowfever mosquito).